A 331-amino-acid chain; its full sequence is uncharacterized protein (331 aa).

43-50 (GANESGKS) provides a ligand contact to ATP.

This is an uncharacterized protein from Methanocaldococcus jannaschii (strain ATCC 43067 / DSM 2661 / JAL-1 / JCM 10045 / NBRC 100440) (Methanococcus jannaschii).